A 953-amino-acid polypeptide reads, in one-letter code: Protein translocase subunit SecA 1 (953 aa).

Residues glutamine 83, 101–105 (GEGKT), and aspartate 490 each bind ATP. The segment covering 854–867 (AAAAAAKASDSAAK) has biased composition (low complexity). Positions 854 to 953 (AAAAAAKASD…DRPAKSHRKG (100 aa)) are disordered. Residues 929–947 (SRRERREAARKQAKADRPA) are compositionally biased toward basic and acidic residues.

Belongs to the SecA family. Monomer and homodimer. Part of the essential Sec protein translocation apparatus which comprises SecA, SecYEG and auxiliary proteins SecDF. Other proteins may also be involved.

The protein localises to the cell membrane. The protein resides in the cytoplasm. The catalysed reaction is ATP + H2O + cellular proteinSide 1 = ADP + phosphate + cellular proteinSide 2.. Functionally, part of the Sec protein translocase complex. Interacts with the SecYEG preprotein conducting channel. Has a central role in coupling the hydrolysis of ATP to the transfer of proteins into and across the cell membrane, serving as an ATP-driven molecular motor driving the stepwise translocation of polypeptide chains across the membrane. The polypeptide is Protein translocase subunit SecA 1 (Mycolicibacterium smegmatis (strain ATCC 700084 / mc(2)155) (Mycobacterium smegmatis)).